The chain runs to 245 residues: MLIFPAIDLKGGRCVRLYQGRMEDAIVYNDDPVSQALAWQAKGAQMIHLVDLDGAFEGEPKNLPVIQAILEAVTVAVQLGGGIRDLNIIDRYLRMGVSRVIIGTAAIKNPELLSVACKEYGQRIVLGLDARDGKVATDGWAGTSQVTALELALEMKGRGLRRVVYTDISKDGTLAGPNLAATAELARATGLKVIASGGFATIDDVKAAAALEGDGIEGAILGKSIYTGAIDVAEAIRVAREGRPC.

The active-site Proton acceptor is the Asp-8. Asp-129 acts as the Proton donor in catalysis.

Belongs to the HisA/HisF family.

The protein localises to the cytoplasm. It carries out the reaction 1-(5-phospho-beta-D-ribosyl)-5-[(5-phospho-beta-D-ribosylamino)methylideneamino]imidazole-4-carboxamide = 5-[(5-phospho-1-deoxy-D-ribulos-1-ylimino)methylamino]-1-(5-phospho-beta-D-ribosyl)imidazole-4-carboxamide. It participates in amino-acid biosynthesis; L-histidine biosynthesis; L-histidine from 5-phospho-alpha-D-ribose 1-diphosphate: step 4/9. This chain is 1-(5-phosphoribosyl)-5-[(5-phosphoribosylamino)methylideneamino] imidazole-4-carboxamide isomerase, found in Heliobacterium modesticaldum (strain ATCC 51547 / Ice1).